The sequence spans 251 residues: Flap endonuclease Xni (251 aa).

Aspartate 104 is a Mg(2+) binding site. The 5'-3' exonuclease domain occupies 160–249 (VQPQQLPDYW…IDGNLQQLRL (90 aa)). K(+) contacts are provided by leucine 171, alanine 172, proline 180, valine 182, and isoleucine 185. The interaction with DNA stretch occupies residues 184–189 (GIGPKS).

The protein belongs to the Xni family. It depends on Mg(2+) as a cofactor. Requires K(+) as cofactor.

Functionally, has flap endonuclease activity. During DNA replication, flap endonucleases cleave the 5'-overhanging flap structure that is generated by displacement synthesis when DNA polymerase encounters the 5'-end of a downstream Okazaki fragment. This Escherichia coli O7:K1 (strain IAI39 / ExPEC) protein is Flap endonuclease Xni.